Reading from the N-terminus, the 349-residue chain is MNIQQALNHITKNIHLTQPQMEEIMRSIMQGEATEAQIGALMMGLRMKGESIDEMTAAARVMREFAIKIDVSDIKHLVDIVGTGGDGQNLFNVSTASSFVIAAAGATIAKHGNRGVSSKSGSSDLLEQAGIHLDLDMQQTERCIREMGVGFLFAPNHHKAMKYAAGPRRELGIRSIFNLLGPLTNPAGVKRFVIGVFSDELCRPIAEVMKQLGAEHVMVVHSKDGLDEISLAAPTTIAELKDGEITEWTLNPEDVGIESQTLNGLVVADATASLKLIKDALSKNKSDIGEKAANMIALNAGAGIYVAGITKTYAQAVAFAQDIIYGGQALEKMSVLAEFTKTLKQSQAD.

5-phospho-alpha-D-ribose 1-diphosphate contacts are provided by residues G82, 85 to 86, 92 to 95, 110 to 118, and S122; these read GD, NVST, and KHGNRGVSS. Position 82 (G82) interacts with anthranilate. A Mg(2+)-binding site is contributed by S94. N113 contributes to the anthranilate binding site. R168 is an anthranilate binding site. D227 and E228 together coordinate Mg(2+).

Belongs to the anthranilate phosphoribosyltransferase family. Homodimer. Mg(2+) serves as cofactor.

It catalyses the reaction N-(5-phospho-beta-D-ribosyl)anthranilate + diphosphate = 5-phospho-alpha-D-ribose 1-diphosphate + anthranilate. The protein operates within amino-acid biosynthesis; L-tryptophan biosynthesis; L-tryptophan from chorismate: step 2/5. Catalyzes the transfer of the phosphoribosyl group of 5-phosphorylribose-1-pyrophosphate (PRPP) to anthranilate to yield N-(5'-phosphoribosyl)-anthranilate (PRA). This is Anthranilate phosphoribosyltransferase from Acinetobacter baumannii (strain ATCC 17978 / DSM 105126 / CIP 53.77 / LMG 1025 / NCDC KC755 / 5377).